Here is a 142-residue protein sequence, read N- to C-terminus: Putative pre-16S rRNA nuclease (142 aa).

Belongs to the YqgF nuclease family.

The protein resides in the cytoplasm. Its function is as follows. Could be a nuclease involved in processing of the 5'-end of pre-16S rRNA. The sequence is that of Putative pre-16S rRNA nuclease from Shouchella clausii (strain KSM-K16) (Alkalihalobacillus clausii).